A 105-amino-acid chain; its full sequence is Large ribosomal subunit protein eL36 (105 aa).

K62 is modified (N6-acetyllysine).

This sequence belongs to the eukaryotic ribosomal protein eL36 family. Component of the large ribosomal subunit.

It localises to the cytoplasm. The protein localises to the cytosol. Component of the large ribosomal subunit. The ribosome is a large ribonucleoprotein complex responsible for the synthesis of proteins in the cell. The sequence is that of Large ribosomal subunit protein eL36 (Rpl36) from Rattus norvegicus (Rat).